The chain runs to 611 residues: Chaperone protein DnaK (611 aa).

Position 172 is a phosphothreonine; by autocatalysis (Thr172). A disordered region spans residues 575–611 (AAQAAQAQQDGGNESADKQDDNVVDADYEEVNDDDKK). The segment covering 596–611 (NVVDADYEEVNDDDKK) has biased composition (acidic residues).

Belongs to the heat shock protein 70 family.

Functionally, acts as a chaperone. The chain is Chaperone protein DnaK from Shouchella clausii (strain KSM-K16) (Alkalihalobacillus clausii).